The chain runs to 217 residues: MTGKITTLLFDLDGTLINTNELIIKTFQVTLQEFLPDRVFTREDILPFIGPSLMETFREINPAHADEMRAFYREYNLKHHDDLILEYDGVYEAIRALYEEDYKLGIVSTKMYDTIMRGLKVTGLDKFFQVVIGLDQVSNAKPDPEGIEMALSLLNATKEEAIMIGDNYHDIEAGKNAETLTAGVAWAIKGPEHLAQFQPDFMLEKMSDLLAIVRDEE.

D11 serves as the catalytic Nucleophile.

It belongs to the HAD-like hydrolase superfamily. PpaX family. The cofactor is Mg(2+).

It carries out the reaction diphosphate + H2O = 2 phosphate + H(+). Its function is as follows. Hydrolyzes pyrophosphate formed during P-Ser-HPr dephosphorylation by HPrK/P. Might play a role in controlling the intracellular pyrophosphate pool. This is Pyrophosphatase PpaX from Listeria monocytogenes serotype 4a (strain HCC23).